The sequence spans 635 residues: Threonine--tRNA ligase (635 aa).

Positions 1–61 (MVSIRLPDGS…DRDAALAIIT (61 aa)) constitute a TGS domain. The catalytic stretch occupies residues 242–533 (DHRKLGKQLD…LIEHHAGAMP (292 aa)). Residues Cys333, His384, and His510 each coordinate Zn(2+).

It belongs to the class-II aminoacyl-tRNA synthetase family. Homodimer. It depends on Zn(2+) as a cofactor.

It is found in the cytoplasm. The enzyme catalyses tRNA(Thr) + L-threonine + ATP = L-threonyl-tRNA(Thr) + AMP + diphosphate + H(+). Functionally, catalyzes the attachment of threonine to tRNA(Thr) in a two-step reaction: L-threonine is first activated by ATP to form Thr-AMP and then transferred to the acceptor end of tRNA(Thr). Also edits incorrectly charged L-seryl-tRNA(Thr). The protein is Threonine--tRNA ligase of Burkholderia ambifaria (strain ATCC BAA-244 / DSM 16087 / CCUG 44356 / LMG 19182 / AMMD) (Burkholderia cepacia (strain AMMD)).